We begin with the raw amino-acid sequence, 588 residues long: Adenine deaminase (588 aa).

It belongs to the metallo-dependent hydrolases superfamily. Adenine deaminase family. In terms of assembly, homodimer. Mn(2+) is required as a cofactor.

The catalysed reaction is adenine + H2O + H(+) = hypoxanthine + NH4(+). The protein is Adenine deaminase of Escherichia coli (strain K12 / DH10B).